Reading from the N-terminus, the 88-residue chain is UPF0335 protein MexAM1_META1p2947 (88 aa).

It belongs to the UPF0335 family.

The protein is UPF0335 protein MexAM1_META1p2947 of Methylorubrum extorquens (strain ATCC 14718 / DSM 1338 / JCM 2805 / NCIMB 9133 / AM1) (Methylobacterium extorquens).